The sequence spans 126 residues: Glycine--tRNA ligase beta subunit (126 aa).

Belongs to the class-II aminoacyl-tRNA synthetase family. As to quaternary structure, tetramer of two alpha and two beta subunits.

The protein localises to the cytoplasm. The catalysed reaction is tRNA(Gly) + glycine + ATP = glycyl-tRNA(Gly) + AMP + diphosphate. This is Glycine--tRNA ligase beta subunit (glyS) from Neisseria gonorrhoeae.